We begin with the raw amino-acid sequence, 353 residues long: Inactive ubiquitin thioesterase OTULINL (353 aa).

The interval 1–80 (MKATRSAPRE…KWWIGYLQRK (80 aa)) is required for membrane binding. The OTU domain maps to 125 to 353 (KCVRPVKRDN…NDHQYHIPVF (229 aa)).

The protein belongs to the peptidase C65 family. Otulin subfamily. As to quaternary structure, does not bind ubiquitin or ubiquitin-like proteins.

The protein resides in the cytoplasm. Its subcellular location is the endoplasmic reticulum membrane. It is found in the nucleus envelope. Its function is as follows. Lacks deubiquitinase activity. This Rattus norvegicus (Rat) protein is Inactive ubiquitin thioesterase OTULINL.